Here is a 250-residue protein sequence, read N- to C-terminus: Probable aquaporin TIP-type (250 aa).

Helical transmembrane passes span 22–42 and 56–76; these read AGLA…GSGI and AGLI…VSVG. The NPA 1 motif lies at 85–87; it reads NPA. Transmembrane regions (helical) follow at residues 104 to 124, 138 to 158, and 170 to 190; these read IVYI…LVFV, VGVG…VYTV, and IGII…LVGG. The NPA 2 motif lies at 198–200; that stretch reads NPA. The helical transmembrane segment at 218-238 threads the bilayer; it reads YWAGPLIGGGIAGLVYEVLFI.

This sequence belongs to the MIP/aquaporin (TC 1.A.8) family. TIP (TC 1.A.8.10) subfamily.

It is found in the membrane. Its function is as follows. Aquaporins facilitate the transport of water and small neutral solutes across cell membranes. May have a role in buffering osmotic fluctations in the highly compartmented vacuole of arbuscule cells. The polypeptide is Probable aquaporin TIP-type (AQP1) (Medicago truncatula (Barrel medic)).